A 676-amino-acid chain; its full sequence is DNA ligase (676 aa).

Positions 1–10 (MTQAHHDDAG) are enriched in basic and acidic residues. A disordered region spans residues 1 to 23 (MTQAHHDDAGARNALQGGLATDP). NAD(+) contacts are provided by residues 52–56 (DAAFD) and 95–96 (SL). The active-site N6-AMP-lysine intermediate is Lys-148. The NAD(+) site is built by Arg-169, Glu-203, and Lys-330. Zn(2+) is bound by residues Cys-420, Cys-423, Cys-436, and Cys-441. In terms of domain architecture, BRCT spans 593-676 (EAEGPLAGLT…DKLIAERRGG (84 aa)).

It belongs to the NAD-dependent DNA ligase family. LigA subfamily. Mg(2+) is required as a cofactor. It depends on Mn(2+) as a cofactor.

The enzyme catalyses NAD(+) + (deoxyribonucleotide)n-3'-hydroxyl + 5'-phospho-(deoxyribonucleotide)m = (deoxyribonucleotide)n+m + AMP + beta-nicotinamide D-nucleotide.. Its function is as follows. DNA ligase that catalyzes the formation of phosphodiester linkages between 5'-phosphoryl and 3'-hydroxyl groups in double-stranded DNA using NAD as a coenzyme and as the energy source for the reaction. It is essential for DNA replication and repair of damaged DNA. The sequence is that of DNA ligase from Sorangium cellulosum (strain So ce56) (Polyangium cellulosum (strain So ce56)).